The primary structure comprises 347 residues: NADH-quinone oxidoreductase subunit H (347 aa).

The next 8 helical transmembrane spans lie at 14–34, 82–102, 115–135, 161–181, 198–218, 258–278, 285–305, and 321–341; these read IMIGQSLLLLVCLLVFIAYIL, AVFLLAPLVAVTLALATWAVI, VGILYVFAISSLEVYGIIMGG, IGFVIVTVLLCAGSLNLTDIV, LLDWHWLSLFPMFVIFFISAL, AIVLMCALTTILFLGGWLPPL, WVPGIIWFILKATLVFFMFGI, and LGWKVFLPLSLAMVVIVAFVL.

This sequence belongs to the complex I subunit 1 family. As to quaternary structure, NDH-1 is composed of 14 different subunits. Subunits NuoA, H, J, K, L, M, N constitute the membrane sector of the complex.

It is found in the cell inner membrane. The enzyme catalyses a quinone + NADH + 5 H(+)(in) = a quinol + NAD(+) + 4 H(+)(out). Its function is as follows. NDH-1 shuttles electrons from NADH, via FMN and iron-sulfur (Fe-S) centers, to quinones in the respiratory chain. The immediate electron acceptor for the enzyme in this species is believed to be ubiquinone. Couples the redox reaction to proton translocation (for every two electrons transferred, four hydrogen ions are translocated across the cytoplasmic membrane), and thus conserves the redox energy in a proton gradient. This subunit may bind ubiquinone. The protein is NADH-quinone oxidoreductase subunit H of Allorhizobium ampelinum (strain ATCC BAA-846 / DSM 112012 / S4) (Agrobacterium vitis (strain S4)).